Here is a 414-residue protein sequence, read N- to C-terminus: MRILMVSWEYPPVVIGGLGRHVHHLSTALAAAGHDVVVLSRCPSGTDPSTHPSSDEVTEGVRVIAAAQDPHEFTFGNDMMAWTLAMGHAMIRAGLRLKKLGTDRSWRPDVVHAHDWLVAHPAIALAQFYDVPMVSTIHATEAGRHSGWVSGALSRQVHAVESWLVRESDSLITCSASMNDEITELFGPGLAEITVIRNGIDAARWPFAARRPRTGPAELLYVGRLEYEKGVHDAIAALPRLRRTHPGTTLTIAGEGTQQDWLIDQARKHRVLRATRFVGHLDHTELLALLHRADAAVLPSHYEPFGLVALEAAAAGTPLVTSNIGGLGEAVINGQTGVSCAPRDVAGLAAAVRSVLDDPAAAQRRARAARQRLTSDFDWQTVATATAQVYLAAKRGERQPQPRLPIVEHALPDR.

Belongs to the glycosyltransferase group 1 family.

It carries out the reaction [(1-&gt;4)-alpha-D-glucosyl](n) + UDP-alpha-D-glucose = [(1-&gt;4)-alpha-D-glucosyl](n+1) + UDP + H(+). It participates in glycan biosynthesis; glycogen biosynthesis. Its function is as follows. Glucosyltransferase that uses UDP-glucose as the sugar donor to elongate alpha-(1-&gt;4)-glucans. Is involved in the biosynthesis of both 6-O-methylglucosyl lipopolysaccharides (MGLP) and glycogen. May also use ADP-glucose as substrate. In Mycobacterium tuberculosis (strain CDC 1551 / Oshkosh), this protein is Glycogen synthase.